Here is a 526-residue protein sequence, read N- to C-terminus: Cytochrome P450 monooxygenase COX2 (526 aa).

The N-linked (GlcNAc...) asparagine glycan is linked to asparagine 11. Residues 12–31 form a helical membrane-spanning segment; that stretch reads ITTNHVAAAVCAGIAVYAIV. N-linked (GlcNAc...) asparagine glycosylation is present at asparagine 302. A heme-binding site is contributed by cysteine 450.

The protein belongs to the cytochrome P450 family. It depends on heme as a cofactor.

Its subcellular location is the membrane. The protein operates within secondary metabolite biosynthesis. Functionally, cytochrome P450 monooxygenase; part of the gene cluster that mediates the biosynthesis of alpha-cuprenene and oxidized derivatives. The alpha-cuprenene synthase COP6 is the only sesquiterpene synthase identified in C.cinereus that appears to be part of a biosynthetic gene cluster and is highly specific since it catalyzes the cyclization of (2E,6E)-farnesyl diphosphate into only one product, alpha-cuprenene. The cytochrome P450 monooxygenase COX2 then oxidizes the cyclohexadiene ring of alpha-cuprenene at positions 1 and 4, yielding first alpha-cuparene, followed by alpha-cuparophenol and a further yet unidentified compound resulting from one additional oxidation step. The cytochrome P450 monooxygenase COX1 then likely catalyzes the oxidation at position 9 of the pentane ring of alpha-cuprenene to give the corresponding hydroxy or ketone derivatives. The protein is Cytochrome P450 monooxygenase COX2 of Coprinopsis cinerea (strain Okayama-7 / 130 / ATCC MYA-4618 / FGSC 9003) (Inky cap fungus).